A 347-amino-acid chain; its full sequence is Phospho-N-acetylmuramoyl-pentapeptide-transferase (347 aa).

10 helical membrane-spanning segments follow: residues 10–30 (SLVF…IFLG), 67–87 (AGGI…LPLG), 91–111 (TWLF…DDIV), 127–147 (FVLQ…IYKG), 164–184 (LGHS…AIVG), 195–215 (LDGL…VVAV), 220–240 (IPLA…SLAF), 250–270 (VFMG…CAVM), 275–295 (LLLI…ILQI), and 325–345 (VVKR…IAAL).

It belongs to the glycosyltransferase 4 family. MraY subfamily. It depends on Mg(2+) as a cofactor.

It localises to the cell inner membrane. It catalyses the reaction UDP-N-acetyl-alpha-D-muramoyl-L-alanyl-gamma-D-glutamyl-meso-2,6-diaminopimeloyl-D-alanyl-D-alanine + di-trans,octa-cis-undecaprenyl phosphate = di-trans,octa-cis-undecaprenyl diphospho-N-acetyl-alpha-D-muramoyl-L-alanyl-D-glutamyl-meso-2,6-diaminopimeloyl-D-alanyl-D-alanine + UMP. It functions in the pathway cell wall biogenesis; peptidoglycan biosynthesis. Functionally, catalyzes the initial step of the lipid cycle reactions in the biosynthesis of the cell wall peptidoglycan: transfers peptidoglycan precursor phospho-MurNAc-pentapeptide from UDP-MurNAc-pentapeptide onto the lipid carrier undecaprenyl phosphate, yielding undecaprenyl-pyrophosphoryl-MurNAc-pentapeptide, known as lipid I. The protein is Phospho-N-acetylmuramoyl-pentapeptide-transferase of Chlamydia abortus (strain DSM 27085 / S26/3) (Chlamydophila abortus).